The following is an 89-amino-acid chain: Small ribosomal subunit protein uS15 (89 aa).

The interval 1–22 (MALEKEEKSQIINNYQLHETDT) is disordered. Positions 10-22 (QIINNYQLHETDT) are enriched in polar residues.

This sequence belongs to the universal ribosomal protein uS15 family. Part of the 30S ribosomal subunit. Forms a bridge to the 50S subunit in the 70S ribosome, contacting the 23S rRNA.

One of the primary rRNA binding proteins, it binds directly to 16S rRNA where it helps nucleate assembly of the platform of the 30S subunit by binding and bridging several RNA helices of the 16S rRNA. In terms of biological role, forms an intersubunit bridge (bridge B4) with the 23S rRNA of the 50S subunit in the ribosome. The sequence is that of Small ribosomal subunit protein uS15 from Chloroflexus aggregans (strain MD-66 / DSM 9485).